We begin with the raw amino-acid sequence, 94 residues long: Phosphoribosyl-ATP pyrophosphatase (94 aa).

It belongs to the PRA-PH family.

Its subcellular location is the cytoplasm. The catalysed reaction is 1-(5-phospho-beta-D-ribosyl)-ATP + H2O = 1-(5-phospho-beta-D-ribosyl)-5'-AMP + diphosphate + H(+). Its pathway is amino-acid biosynthesis; L-histidine biosynthesis; L-histidine from 5-phospho-alpha-D-ribose 1-diphosphate: step 2/9. The chain is Phosphoribosyl-ATP pyrophosphatase (hisE) from Pyrobaculum aerophilum (strain ATCC 51768 / DSM 7523 / JCM 9630 / CIP 104966 / NBRC 100827 / IM2).